Consider the following 320-residue polypeptide: GTPase Era (320 aa).

Positions 25–193 (HCGFIAIVGR…RKHVRDHLPK (169 aa)) constitute an Era-type G domain. The G1 stretch occupies residues 33 to 40 (GRPNVGKS). 33-40 (GRPNVGKS) is a GTP binding site. A G2 region spans residues 59-63 (QTTRH). The G3 stretch occupies residues 80–83 (DTPG). Residues 80 to 84 (DTPGL) and 142 to 145 (NKVD) contribute to the GTP site. The interval 142–145 (NKVD) is G4. Residues 172–174 (ISA) are G5. The region spanning 216–302 (VREKLMRFTG…YLETWVKVKS (87 aa)) is the KH type-2 domain.

This sequence belongs to the TRAFAC class TrmE-Era-EngA-EngB-Septin-like GTPase superfamily. Era GTPase family. Monomer.

It localises to the cytoplasm. The protein localises to the cell inner membrane. Its function is as follows. An essential GTPase that binds both GDP and GTP, with rapid nucleotide exchange. Plays a role in 16S rRNA processing and 30S ribosomal subunit biogenesis and possibly also in cell cycle regulation and energy metabolism. This Vibrio vulnificus (strain CMCP6) protein is GTPase Era.